The sequence spans 358 residues: sn-glycerol-3-phosphate import ATP-binding protein UgpC (358 aa).

One can recognise an ABC transporter domain in the interval 4 to 235; the sequence is VELKQVRKTY…PATLFVASFI (232 aa). Residue 37–44 participates in ATP binding; that stretch reads GPSGCGKS.

It belongs to the ABC transporter superfamily. sn-glycerol-3-phosphate importer (TC 3.A.1.1.3) family. The complex is composed of two ATP-binding proteins (UgpC), two transmembrane proteins (UgpA and UgpE) and a solute-binding protein (UgpB).

Its subcellular location is the cell inner membrane. It carries out the reaction sn-glycerol 3-phosphate(out) + ATP + H2O = sn-glycerol 3-phosphate(in) + ADP + phosphate + H(+). Functionally, part of the ABC transporter complex UgpBAEC involved in sn-glycerol-3-phosphate (G3P) import. Responsible for energy coupling to the transport system. The chain is sn-glycerol-3-phosphate import ATP-binding protein UgpC from Roseobacter denitrificans (strain ATCC 33942 / OCh 114) (Erythrobacter sp. (strain OCh 114)).